A 543-amino-acid polypeptide reads, in one-letter code: DM7 family protein GG19680 (543 aa).

Over residues 415 to 430 (GETQEMDEAHPTKEES) the composition is skewed to basic and acidic residues. A disordered region spans residues 415–443 (GETQEMDEAHPTKEESKSEEEGEVQSGSQ).

This sequence belongs to the DM7 family.

The sequence is that of DM7 family protein GG19680 from Drosophila erecta (Fruit fly).